A 422-amino-acid polypeptide reads, in one-letter code: Histidine--tRNA ligase (422 aa).

The protein belongs to the class-II aminoacyl-tRNA synthetase family. In terms of assembly, homodimer.

Its subcellular location is the cytoplasm. It catalyses the reaction tRNA(His) + L-histidine + ATP = L-histidyl-tRNA(His) + AMP + diphosphate + H(+). The sequence is that of Histidine--tRNA ligase from Prosthecochloris aestuarii (strain DSM 271 / SK 413).